Consider the following 316-residue polypeptide: MFDHTTVLLKETVDGLNIDPDGVYVDCTLGGAGHSEYLVQQLSDKGRLICFDQDMTAIENAKIRLAPYIERVTFIHSNFRYLKEELLAHGFEQVDGILYDLGVSSPQLDTPERGFSYHHDAPLDMRMDQTATLTAFEVVNQWAYEDLVRIFFRYGEEKFSKQVARKIEEARKSAPIETTGQLVELIKEGIPAAARRKGGHPAKRIFQAIRIAVNDELGAAEDSLVDAIDMINVGGRISVITFHSLEDRLCKTIFKEASSLPELPPNLPVIPDDMKPTLKLITRKPIVPSDEELEVNNRARSAKLRVVEKINDKGRE.

S-adenosyl-L-methionine-binding positions include 32–34, Asp52, Phe79, Asp100, and Gln107; that span reads AGH.

The protein belongs to the methyltransferase superfamily. RsmH family.

It localises to the cytoplasm. It carries out the reaction cytidine(1402) in 16S rRNA + S-adenosyl-L-methionine = N(4)-methylcytidine(1402) in 16S rRNA + S-adenosyl-L-homocysteine + H(+). Functionally, specifically methylates the N4 position of cytidine in position 1402 (C1402) of 16S rRNA. The chain is Ribosomal RNA small subunit methyltransferase H from Lysinibacillus sphaericus (strain C3-41).